Here is a 215-residue protein sequence, read N- to C-terminus: uncharacterized protein (215 aa).

The chain crosses the membrane as a helical span at residues 98–119 (AAALAVAVASLCVCTLLLTHIV).

Its subcellular location is the membrane. This is an uncharacterized protein from Treponema pallidum (strain Nichols).